The following is a 75-amino-acid chain: Small ribosomal subunit protein bS18 (75 aa).

Belongs to the bacterial ribosomal protein bS18 family. Part of the 30S ribosomal subunit. Forms a tight heterodimer with protein bS6.

Functionally, binds as a heterodimer with protein bS6 to the central domain of the 16S rRNA, where it helps stabilize the platform of the 30S subunit. The chain is Small ribosomal subunit protein bS18 from Buchnera aphidicola subsp. Acyrthosiphon pisum (strain 5A).